A 115-amino-acid polypeptide reads, in one-letter code: Glutaredoxin-like protein C5orf63 homolog (115 aa).

An intrachain disulfide couples cysteine 40 to cysteine 43.

Belongs to the glutaredoxin family. YDR286C subfamily.

The protein is Glutaredoxin-like protein C5orf63 homolog of Mus musculus (Mouse).